A 580-amino-acid polypeptide reads, in one-letter code: Putative adenine deaminase YerA (580 aa).

Ser399 carries the phosphoserine modification.

This sequence belongs to the metallo-dependent hydrolases superfamily. Adenine deaminase family.

The enzyme catalyses adenine + H2O + H(+) = hypoxanthine + NH4(+). This Bacillus subtilis (strain 168) protein is Putative adenine deaminase YerA (yerA).